A 210-amino-acid polypeptide reads, in one-letter code: tRNA (guanine-N(7)-)-methyltransferase (210 aa).

Residues E43, E68, D95, and D117 each contribute to the S-adenosyl-L-methionine site. D117 is an active-site residue. Substrate is bound by residues K121, D153, and 190–193; that span reads TEYE.

Belongs to the class I-like SAM-binding methyltransferase superfamily. TrmB family.

The enzyme catalyses guanosine(46) in tRNA + S-adenosyl-L-methionine = N(7)-methylguanosine(46) in tRNA + S-adenosyl-L-homocysteine. Its pathway is tRNA modification; N(7)-methylguanine-tRNA biosynthesis. Catalyzes the formation of N(7)-methylguanine at position 46 (m7G46) in tRNA. This is tRNA (guanine-N(7)-)-methyltransferase from Macrococcus caseolyticus (strain JCSC5402) (Macrococcoides caseolyticum).